Here is a 1513-residue protein sequence, read N- to C-terminus: DNA-directed RNA polymerase subunit beta'' (1513 aa).

Cys-220, Cys-296, Cys-303, and Cys-306 together coordinate Zn(2+). The segment at 644-769 (RTREKDSENE…EYGNPEEDSV (126 aa)) is disordered. Residues 659–679 (NEYRTREEECKTLEDEYRTRE) show a composition bias toward basic and acidic residues. The segment covering 680–707 (EEYETLEDEYGIPENEYETLEDEYGILE) has biased composition (acidic residues). Over residues 726–737 (NKYRPREDKYGT) the composition is skewed to basic and acidic residues. Acidic residues predominate over residues 738–767 (LEEDSEDEHGTLEEDSEEDSEDEYGNPEED).

This sequence belongs to the RNA polymerase beta' chain family. RpoC2 subfamily. In terms of assembly, in plastids the minimal PEP RNA polymerase catalytic core is composed of four subunits: alpha, beta, beta', and beta''. When a (nuclear-encoded) sigma factor is associated with the core the holoenzyme is formed, which can initiate transcription. The cofactor is Zn(2+).

The protein resides in the plastid. Its subcellular location is the chloroplast. It carries out the reaction RNA(n) + a ribonucleoside 5'-triphosphate = RNA(n+1) + diphosphate. DNA-dependent RNA polymerase catalyzes the transcription of DNA into RNA using the four ribonucleoside triphosphates as substrates. The sequence is that of DNA-directed RNA polymerase subunit beta'' from Oryza sativa (Rice).